The following is a 352-amino-acid chain: Tropomodulin-3 (352 aa).

Serine 25 is subject to Phosphoserine.

It belongs to the tropomodulin family. Binds to the N-terminus of tropomyosin and to actin. Interacts with FLII. As to expression, ubiquitous.

It localises to the cytoplasm. It is found in the cytoskeleton. Blocks the elongation and depolymerization of the actin filaments at the pointed end. The Tmod/TM complex contributes to the formation of the short actin protofilament, which in turn defines the geometry of the membrane skeleton. The chain is Tropomodulin-3 (TMOD3) from Homo sapiens (Human).